The following is a 611-amino-acid chain: Pescadillo homolog (611 aa).

The interval 310–335 (VQMGDPDEASPGEEEQFVAHASKSAP) is disordered. Positions 314–325 (DPDEASPGEEEQ) are enriched in acidic residues. Residues 354-455 (PSSRLFAPYT…KILLEDTYAQ (102 aa)) form the BRCT domain. Disordered stretches follow at residues 469-506 (YEGA…ESNT) and 545-611 (VKKA…AGGK). The segment covering 482–498 (ADMDVETDGEEGEADAS) has biased composition (acidic residues). Basic and acidic residues-rich tracts occupy residues 552-569 (KKPD…KDMN) and 579-602 (KLYE…EQRK). A coiled-coil region spans residues 580-609 (LYEKMKYSQQKKAAEKEKLEQRKKQLQKAG).

The protein belongs to the pescadillo family. As to quaternary structure, component of the NOP7 complex, composed of ERB1, NOP7 and YTM1. The complex is held together by ERB1, which interacts with NOP7 via its N-terminal domain and with YTM1 via a high-affinity interaction between the seven-bladed beta-propeller domains of the 2 proteins. The NOP7 complex associates with the 66S pre-ribosome.

Its subcellular location is the nucleus. It localises to the nucleolus. It is found in the nucleoplasm. Functionally, component of the NOP7 complex, which is required for maturation of the 25S and 5.8S ribosomal RNAs and formation of the 60S ribosome. The polypeptide is Pescadillo homolog (Coprinopsis cinerea (strain Okayama-7 / 130 / ATCC MYA-4618 / FGSC 9003) (Inky cap fungus)).